Here is an 87-residue protein sequence, read N- to C-terminus: Small ribosomal subunit protein bS20 (87 aa).

A compositionally biased stretch (basic residues) spans 1–15; it reads MANTRSAKKMVRKIA. Disordered stretches follow at residues 1–22 and 64–87; these read MANT…DVNK and KGVT…KAMA.

Belongs to the bacterial ribosomal protein bS20 family.

Functionally, binds directly to 16S ribosomal RNA. The polypeptide is Small ribosomal subunit protein bS20 (Hyphomonas neptunium (strain ATCC 15444)).